Here is a 1016-residue protein sequence, read N- to C-terminus: Coiled-coil domain-containing protein 57 (1016 aa).

Positions 1–503 (MLPLCSEREL…HGLLPGQEAQ (503 aa)) are centrosomal targeting domain. Coiled-coil stretches lie at residues 14-607 (LARK…PVKT), 676-700 (SEVD…KHLK), and 748-775 (VTHL…LLEM). Disordered stretches follow at residues 500-519 (QEAQ…DSPS) and 549-573 (HLPP…DSTP). A microtubule binding domain region spans residues 604 to 1016 (PVKTSVATAD…SRIRNYNLKD (413 aa)). Disordered regions lie at residues 781 to 921 (AEQG…LASS) and 933 to 1016 (GSSP…NLKD). 2 stretches are compositionally biased toward polar residues: residues 846 to 859 (QPHS…TNTP) and 934 to 945 (SSPSGVPSQDNS).

In terms of assembly, interacts with CEP63; the interaction is required for their location to proximal end of centrioles. Interacts with microtubules.

The protein localises to the cytoplasm. The protein resides in the cytoskeleton. It localises to the microtubule organizing center. Its subcellular location is the centrosome. It is found in the centriolar satellite. The protein localises to the centriole. The protein resides in the spindle. Pleiotropic regulator of centriole duplication, mitosis, and ciliogenesis. Critical interface between centrosome and microtubule-mediated cellular processes. Centriole duplication protein required for recruitment of CEP63, CEP152, and PLK4 to the centrosome. Independent of its centrosomal targeting, localizes to and interacts with microtubules and regulates microtubule nucleation, stability, and mitotic progression. The chain is Coiled-coil domain-containing protein 57 from Mus musculus (Mouse).